The chain runs to 469 residues: Sulfate adenylyltransferase subunit 1 (469 aa).

One can recognise a tr-type G domain in the interval 22 to 236 (KDMLRVLTCG…LLNTVSVEQD (215 aa)). Residues 31–38 (GSVDDGKS) form a G1 region. A GTP-binding site is contributed by 31–38 (GSVDDGKS). Residues 89 to 93 (GITID) are G2. Positions 110–113 (DTPG) are G3. Residues 110–114 (DTPGH) and 165–168 (NKMD) contribute to the GTP site. Positions 165–168 (NKMD) are G4. The segment at 202-204 (SAL) is G5.

The protein belongs to the TRAFAC class translation factor GTPase superfamily. Classic translation factor GTPase family. CysN/NodQ subfamily. In terms of assembly, heterodimer composed of CysD, the smaller subunit, and CysN.

It catalyses the reaction sulfate + ATP + H(+) = adenosine 5'-phosphosulfate + diphosphate. The protein operates within sulfur metabolism; hydrogen sulfide biosynthesis; sulfite from sulfate: step 1/3. With CysD forms the ATP sulfurylase (ATPS) that catalyzes the adenylation of sulfate producing adenosine 5'-phosphosulfate (APS) and diphosphate, the first enzymatic step in sulfur assimilation pathway. APS synthesis involves the formation of a high-energy phosphoric-sulfuric acid anhydride bond driven by GTP hydrolysis by CysN coupled to ATP hydrolysis by CysD. The chain is Sulfate adenylyltransferase subunit 1 from Shewanella woodyi (strain ATCC 51908 / MS32).